The chain runs to 196 residues: Probable malonic semialdehyde reductase RutE (196 aa).

It belongs to the nitroreductase family. HadB/RutE subfamily. The cofactor is FMN.

It catalyses the reaction 3-hydroxypropanoate + NADP(+) = 3-oxopropanoate + NADPH + H(+). May reduce toxic product malonic semialdehyde to 3-hydroxypropionic acid, which is excreted. The polypeptide is Probable malonic semialdehyde reductase RutE (Shigella sonnei (strain Ss046)).